The following is a 236-amino-acid chain: Probable transcriptional activator protein TraR (236 aa).

One can recognise an HTH luxR-type domain in the interval 169 to 234 (VLNPKQMLSP…QLVAIAKDRG (66 aa)). The segment at residues 193–212 (ASVTANLTGINARTVQHYLD) is a DNA-binding region (H-T-H motif).

The protein belongs to the autoinducer-regulated transcriptional regulatory protein family.

Positive regulation of conjugal transfer. TraR activates target genes in the presence of AAI and also activates traR and traI themselves. This chain is Probable transcriptional activator protein TraR (traR), found in Sinorhizobium fredii (strain NBRC 101917 / NGR234).